The following is a 636-amino-acid chain: 1-deoxy-D-xylulose-5-phosphate synthase (636 aa).

Thiamine diphosphate contacts are provided by residues histidine 74 and 115–117 (GHS). Aspartate 146 serves as a coordination point for Mg(2+). Residues 147 to 148 (GA), asparagine 175, tyrosine 286, and glutamate 367 each bind thiamine diphosphate. Asparagine 175 contacts Mg(2+).

It belongs to the transketolase family. DXPS subfamily. As to quaternary structure, homodimer. Requires Mg(2+) as cofactor. Thiamine diphosphate serves as cofactor.

It catalyses the reaction D-glyceraldehyde 3-phosphate + pyruvate + H(+) = 1-deoxy-D-xylulose 5-phosphate + CO2. The protein operates within metabolic intermediate biosynthesis; 1-deoxy-D-xylulose 5-phosphate biosynthesis; 1-deoxy-D-xylulose 5-phosphate from D-glyceraldehyde 3-phosphate and pyruvate: step 1/1. Its function is as follows. Catalyzes the acyloin condensation reaction between C atoms 2 and 3 of pyruvate and glyceraldehyde 3-phosphate to yield 1-deoxy-D-xylulose-5-phosphate (DXP). In Halothermothrix orenii (strain H 168 / OCM 544 / DSM 9562), this protein is 1-deoxy-D-xylulose-5-phosphate synthase.